A 959-amino-acid chain; its full sequence is Translation initiation factor IF-2 (959 aa).

A compositionally biased stretch (basic and acidic residues) spans 1-10 (MSDKTNDDKT). The disordered stretch occupies residues 1-374 (MSDKTNDDKT…SQMQETREKI (374 aa)). The span at 27-37 (EQSTVRQNFSH) shows a compositional bias: polar residues. Low complexity-rich tracts occupy residues 63 to 118 (AAAA…VTKP) and 128 to 138 (QRPGGQQAQRP). Composition is skewed to basic and acidic residues over residues 154–225 (SEMD…EAAK) and 232–241 (ARSERRDDAR). The segment covering 246 to 284 (GARPQQAGRPQGGRPQPAGRPQQGSPRPAPIIADAAPIA) has biased composition (low complexity). Basic and acidic residues predominate over residues 318 to 333 (PEVRAPKVVKGEDDRR). One can recognise a tr-type G domain in the interval 457 to 626 (SRPPVVTIMG…LLQAEMLDLK (170 aa)). Positions 466–473 (GHVDHGKT) are G1. Position 466 to 473 (466 to 473 (GHVDHGKT)) interacts with GTP. A G2 region spans residues 491 to 495 (GITQH). Positions 512 to 515 (DTPG) are G3. GTP is bound by residues 512–516 (DTPGH) and 566–569 (NKID). Positions 566-569 (NKID) are G4. The interval 602-604 (SAK) is G5.

It belongs to the TRAFAC class translation factor GTPase superfamily. Classic translation factor GTPase family. IF-2 subfamily.

The protein resides in the cytoplasm. In terms of biological role, one of the essential components for the initiation of protein synthesis. Protects formylmethionyl-tRNA from spontaneous hydrolysis and promotes its binding to the 30S ribosomal subunits. Also involved in the hydrolysis of GTP during the formation of the 70S ribosomal complex. This chain is Translation initiation factor IF-2, found in Brucella abortus (strain 2308).